A 135-amino-acid polypeptide reads, in one-letter code: MVMPLVLSLALTPPPLCHATLVDPRTTLQCHVRSYTFRATKPPIVNENGDPVTCQGDVRVSSCWGRCDSSEIGDYKMPFKISNHPVCTYTGRVSRTVRLSQCAGYPDPTVQVFDATGCACQFCNSETQLCEKLNG.

Positions 1–19 are cleaved as a signal peptide; sequence MVMPLVLSLALTPPPLCHA. Disulfide bonds link cysteine 30-cysteine 87, cysteine 54-cysteine 102, cysteine 63-cysteine 118, cysteine 67-cysteine 120, and cysteine 123-cysteine 130.

Belongs to the glycoprotein hormones subunit beta family. As to quaternary structure, heterodimer with GPHA2; non-covalently-linked. As to expression, expressed by the venom duct.

It is found in the secreted. The chain is Thyrostimulin beta-5 subunit from Conus victoriae (Queen Victoria cone).